The following is a 1033-amino-acid chain: NACHT, LRR and PYD domains-containing protein 11 (1033 aa).

In terms of domain architecture, Pyrin spans Met1 to Arg91. Residues Leu147–Leu470 form the NACHT domain. Gly153–Thr160 contributes to the ATP binding site. LRR repeat units follow at residues Cys588 to Pro611, Met632 to Lys655, Gly745 to Asp768, Ser802 to Leu827, Asn859 to Gly882, and Leu919 to Pro944.

This sequence belongs to the NLRP family.

Functionally, involved in inflammation. The sequence is that of NACHT, LRR and PYD domains-containing protein 11 (NLRP11) from Homo sapiens (Human).